Reading from the N-terminus, the 395-residue chain is Flap endonuclease 1 (395 aa).

The interval 1–108 (MGILGLSKLL…DELEMRRQKA (108 aa)) is N-domain. Residue Asp34 coordinates Mg(2+). Arg74 serves as a coordination point for DNA. Mg(2+) contacts are provided by Asp90, Glu162, Glu164, Asp183, and Asp185. Positions 126 to 257 (MMEKMSKRTV…QKAWEGIQRY (132 aa)) are I-domain. A DNA-binding site is contributed by Glu162. Positions 235 and 237 each coordinate DNA. Asp237 serves as a coordination point for Mg(2+). The segment at 340–348 (TQGRLDSFF) is interaction with PCNA.

It belongs to the XPG/RAD2 endonuclease family. FEN1 subfamily. In terms of assembly, interacts with PCNA. Three molecules of FEN1 bind to one PCNA trimer with each molecule binding to one PCNA monomer. PCNA stimulates the nuclease activity without altering cleavage specificity. Requires Mg(2+) as cofactor. Post-translationally, phosphorylated. Phosphorylation upon DNA damage induces relocalization to the nuclear plasma.

It is found in the nucleus. Its subcellular location is the nucleolus. The protein localises to the nucleoplasm. The protein resides in the mitochondrion. In terms of biological role, structure-specific nuclease with 5'-flap endonuclease and 5'-3' exonuclease activities involved in DNA replication and repair. During DNA replication, cleaves the 5'-overhanging flap structure that is generated by displacement synthesis when DNA polymerase encounters the 5'-end of a downstream Okazaki fragment. It enters the flap from the 5'-end and then tracks to cleave the flap base, leaving a nick for ligation. Also involved in the long patch base excision repair (LP-BER) pathway, by cleaving within the apurinic/apyrimidinic (AP) site-terminated flap. Acts as a genome stabilization factor that prevents flaps from equilibrating into structures that lead to duplications and deletions. Also possesses 5'-3' exonuclease activity on nicked or gapped double-stranded DNA, and exhibits RNase H activity. Also involved in replication and repair of rDNA and in repairing mitochondrial DNA. The polypeptide is Flap endonuclease 1 (Leishmania infantum).